We begin with the raw amino-acid sequence, 370 residues long: tRNA-specific 2-thiouridylase MnmA (370 aa).

Residues 14–21 (GMSGGVDS) and methionine 40 contribute to the ATP site. The segment at 100–102 (NPD) is interaction with target base in tRNA. The active-site Nucleophile is the cysteine 105. Cysteine 105 and cysteine 205 are disulfide-bonded. Glycine 129 provides a ligand contact to ATP. The tract at residues 155–157 (KDQ) is interaction with tRNA. Cysteine 205 functions as the Cysteine persulfide intermediate in the catalytic mechanism. The tract at residues 321-322 (RY) is interaction with tRNA.

The protein belongs to the MnmA/TRMU family.

It localises to the cytoplasm. The catalysed reaction is S-sulfanyl-L-cysteinyl-[protein] + uridine(34) in tRNA + AH2 + ATP = 2-thiouridine(34) in tRNA + L-cysteinyl-[protein] + A + AMP + diphosphate + H(+). Functionally, catalyzes the 2-thiolation of uridine at the wobble position (U34) of tRNA, leading to the formation of s(2)U34. This is tRNA-specific 2-thiouridylase MnmA from Bordetella avium (strain 197N).